A 129-amino-acid polypeptide reads, in one-letter code: Arsenate-mycothiol transferase ArsC2 (129 aa).

Belongs to the low molecular weight phosphotyrosine protein phosphatase family.

The protein resides in the cytoplasm. It carries out the reaction mycothiol + arsenate = arseno-mycothiol + H2O. Its function is as follows. Involved in defense against toxic arsenate. Involved in the mycothiol/myoredoxin redox pathway which uses a mycothioltransferase mechanism; facilitates adduct formation between arsenate and mycothiol. The protein is Arsenate-mycothiol transferase ArsC2 (arsC2) of Corynebacterium glutamicum (strain ATCC 13032 / K051).